We begin with the raw amino-acid sequence, 272 residues long: Phosphate import ATP-binding protein PstB (272 aa).

In terms of domain architecture, ABC transporter spans valine 18–alanine 257. Glycine 50–serine 57 is an ATP binding site.

This sequence belongs to the ABC transporter superfamily. Phosphate importer (TC 3.A.1.7) family. In terms of assembly, the complex is composed of two ATP-binding proteins (PstB), two transmembrane proteins (PstC and PstA) and a solute-binding protein (PstS).

The protein localises to the cell inner membrane. The enzyme catalyses phosphate(out) + ATP + H2O = ADP + 2 phosphate(in) + H(+). Part of the ABC transporter complex PstSACB involved in phosphate import. Responsible for energy coupling to the transport system. The polypeptide is Phosphate import ATP-binding protein PstB (Synechococcus sp. (strain CC9311)).